The primary structure comprises 227 residues: Testis-expressed protein 30 (227 aa).

This is Testis-expressed protein 30 (TEX30) from Homo sapiens (Human).